We begin with the raw amino-acid sequence, 217 residues long: Ribulose-phosphate 3-epimerase (217 aa).

Ser-6 contacts substrate. 3 residues coordinate a divalent metal cation: His-29, Asp-31, and His-62. The active-site Proton acceptor is the Asp-31. Residues His-62, Gly-138–Gly-141, Asp-171–Gly-173, and Gly-193–Ser-194 contribute to the substrate site. Asp-171 is an a divalent metal cation binding site. Asp-171 acts as the Proton donor in catalysis.

Belongs to the ribulose-phosphate 3-epimerase family. A divalent metal cation serves as cofactor.

The enzyme catalyses D-ribulose 5-phosphate = D-xylulose 5-phosphate. Its pathway is carbohydrate degradation. Functionally, catalyzes the reversible epimerization of D-ribulose 5-phosphate to D-xylulose 5-phosphate. In Helicobacter pylori (strain ATCC 700392 / 26695) (Campylobacter pylori), this protein is Ribulose-phosphate 3-epimerase.